The chain runs to 302 residues: MDNPTTPIAVVGPTASGKSALGVSLAHHLNGEVVNVDSMQLYKGMDIGTAKLTLEEREGIVHHLLDVWDISETASVARYQSQAIAVVEDIQRRGKTPILVGGSMLYVQSLVDDWQFPPTDPSVRAKWESKLNEVGVEALHALLAQKDPQAASIIELKDPRRTVRALEVIELTGKPFNASQPPKNAPPRWNTQIIGLGTNTEWLNPRIDLRTELMFEKGFVHEVENLVGKGLIADSTAGHAIGYAQVLQHFAGELSVDEMIEHTKIGTRRYVRRQRSWFKRDPRIHWIDASGDTFSMALSLLS.

12–19 (GPTASGKS) serves as a coordination point for ATP. 14–19 (TASGKS) is a substrate binding site. The interaction with substrate tRNA stretch occupies residues 37–40 (DSMQ).

The protein belongs to the IPP transferase family. Monomer. Mg(2+) is required as a cofactor.

It catalyses the reaction adenosine(37) in tRNA + dimethylallyl diphosphate = N(6)-dimethylallyladenosine(37) in tRNA + diphosphate. Catalyzes the transfer of a dimethylallyl group onto the adenine at position 37 in tRNAs that read codons beginning with uridine, leading to the formation of N6-(dimethylallyl)adenosine (i(6)A). This chain is tRNA dimethylallyltransferase, found in Corynebacterium diphtheriae (strain ATCC 700971 / NCTC 13129 / Biotype gravis).